The chain runs to 460 residues: MGKEDKQHINIVVIGHVDSGKSTTTGHLIYKCGGIDQRTIEKFEKEAAELGKGSFKYAWVLDKLKSERERGITIDIALWKFQTSKYEVTVIDAPGHRDFIKNMITGTSQADCAILIIASGTGEFEAGISKDGQTREHALLAFTLGVRQLIVALNKMDTCKWSQDRYNEIVKETSNFIKKVGYNPKSVPFVPISGFNGDNMIEASTNCPWYKGWEKETKAGKSTGKTLLEAIDAIEPPVRPTDKPLRLPLQDVYKISGIGTVPVGRVETGVIKPGMVVTFAPANVTTEVKSVEMHHQQLQAGNPGDNVGFNVKNVSVKEVRRGNVAGDSKNDPPAGCDSFNAQVIVLNHPGQVGNGYAPVLDCHTAHIACKFAELLEKIDRRTGKSVEDKPKFIKSGDAAIVKMIPSKPMCVESFTDFPPLGRFAVRDMRQTVAVGVIKSVEKNTGGSGKVTKAAQKAGKK.

Gly-2 carries the n,N,N-trimethylglycine modification. N6,N6-dimethyllysine; alternate is present on Lys-3. Lys-3 bears the N6-methyllysine; alternate mark. In terms of domain architecture, tr-type G spans 6 to 241 (KQHINIVVIG…DAIEPPVRPT (236 aa)). The tract at residues 15–22 (GHVDSGKS) is G1. 15-22 (GHVDSGKS) provides a ligand contact to GTP. Lys-31 is subject to N6-methyllysine. The tract at residues 71 to 75 (GITID) is G2. The residue at position 80 (Lys-80) is an N6,N6,N6-trimethyllysine. Residues 92–95 (DAPG) are G3. GTP contacts are provided by residues 92–96 (DAPGH) and 154–157 (NKMD). A G4 region spans residues 154–157 (NKMD). The G5 stretch occupies residues 193–195 (SGF). Residue Lys-317 is modified to N6,N6-dimethyllysine; alternate. Lys-317 bears the N6-methyllysine; alternate mark. Lys-391 bears the N6-methyllysine mark.

Belongs to the TRAFAC class translation factor GTPase superfamily. Classic translation factor GTPase family. EF-Tu/EF-1A subfamily.

The protein resides in the cytoplasm. Functionally, this protein promotes the GTP-dependent binding of aminoacyl-tRNA to the A-site of ribosomes during protein biosynthesis. In Aspergillus oryzae (strain ATCC 42149 / RIB 40) (Yellow koji mold), this protein is Elongation factor 1-alpha (tef1).